Here is a 282-residue protein sequence, read N- to C-terminus: Putative hydrolase Bcenmc03_4750 (282 aa).

Mg(2+) is bound by residues glutamate 124, glutamate 126, and aspartate 155.

The protein belongs to the FAH family. It depends on Mg(2+) as a cofactor.

The polypeptide is Putative hydrolase Bcenmc03_4750 (Burkholderia orbicola (strain MC0-3)).